The following is a 249-amino-acid chain: tRNA (guanine-N(1)-)-methyltransferase (249 aa).

S-adenosyl-L-methionine is bound by residues Gly117 and Leu137–Leu142.

Belongs to the RNA methyltransferase TrmD family. Homodimer.

It localises to the cytoplasm. The enzyme catalyses guanosine(37) in tRNA + S-adenosyl-L-methionine = N(1)-methylguanosine(37) in tRNA + S-adenosyl-L-homocysteine + H(+). In terms of biological role, specifically methylates guanosine-37 in various tRNAs. The protein is tRNA (guanine-N(1)-)-methyltransferase of Janthinobacterium sp. (strain Marseille) (Minibacterium massiliensis).